Consider the following 140-residue polypeptide: ATP synthase epsilon chain (140 aa).

This sequence belongs to the ATPase epsilon chain family. In terms of assembly, F-type ATPases have 2 components, CF(1) - the catalytic core - and CF(0) - the membrane proton channel. CF(1) has five subunits: alpha(3), beta(3), gamma(1), delta(1), epsilon(1). CF(0) has three main subunits: a, b and c.

Its subcellular location is the cell inner membrane. Functionally, produces ATP from ADP in the presence of a proton gradient across the membrane. This is ATP synthase epsilon chain from Vibrio vulnificus (strain CMCP6).